Reading from the N-terminus, the 738-residue chain is Zinc finger protein 235 (738 aa).

Residues 8–79 form the KRAB domain; the sequence is VTFKDVAVAF…ELQTQRGKHS (72 aa). The C2H2-type 1; degenerate zinc-finger motif lies at 263-285; sequence YQGNECEEAFNDSSSLELHKQVH. C2H2-type zinc fingers lie at residues 319–341, 347–369, 375–397, 403–425, 431–453, 459–481, 487–509, 515–537, 543–565, 571–593, 599–621, 627–649, 655–677, 683–705, and 711–733; these read YWCH…QRVH, YTCH…LPIH, YRCD…CRVH, YKCE…ERIH, YKCG…QRVH, YKCD…QRVH, YKCE…QRVH, FRCN…QRVH, YKCE…QSVH, FKCD…QRVH, YKCD…QIIH, FKCE…QRVH, YTCQ…QRVH, and YICD…QRVH.

The protein belongs to the krueppel C2H2-type zinc-finger protein family.

It localises to the nucleus. May be involved in transcriptional regulation. This is Zinc finger protein 235 (ZNF235) from Homo sapiens (Human).